We begin with the raw amino-acid sequence, 539 residues long: Acid-sensing ion channel 4 (539 aa).

The Cytoplasmic segment spans residues 1-68 (MPIEIVCKIK…GPGPHGLRRT (68 aa)). A helical membrane pass occupies residues 69-89 (LWALALLTSLAAFLYQAASLA). The Extracellular segment spans residues 90–438 (RGYLTRPHLV…EQQAAYGLSA (349 aa)). 2 disulfide bridges follow: Cys-118-Cys-202 and Cys-180-Cys-187. N-linked (GlcNAc...) asparagine glycosylation is found at Asn-191, Asn-243, Asn-341, and Asn-376. 5 disulfides stabilise this stretch: Cys-296–Cys-375, Cys-318–Cys-371, Cys-322–Cys-369, Cys-331–Cys-353, and Cys-333–Cys-345. The helical transmembrane segment at 439–459 (LLGDLGGQMGLFIGASILTLL) threads the bilayer. The GAS motif; ion selectivity filter motif lies at 452–454 (GAS). At 460–539 (EILDYIYEVS…PGSLFEDFAC (80 aa)) the chain is on the cytoplasmic side. Residues 500 to 531 (KEQSPCPSRGRAEGGGASSLLPNHHHPHGPPG) are disordered.

This sequence belongs to the amiloride-sensitive sodium channel (TC 1.A.6) family. ASIC4 subfamily. In terms of assembly, homotrimer. Heterotrimer; with other ASIC proteins producing functional channels.

The protein localises to the cell membrane. Functionally, does not exhibit measurable stand-alone pH-gated sodium channel activity but may form pH-gated heterotrimeric sodium channels. Its activity could also depend on alternative gating mechanisms. This is Acid-sensing ion channel 4 from Mus musculus (Mouse).